The chain runs to 201 residues: B-cell CLL/lymphoma 7 protein family member B-B (201 aa).

Residues 104–201 are disordered; it reads QSNTKVDSSS…VCTEHNSTVS (98 aa).

This sequence belongs to the BCL7 family.

The sequence is that of B-cell CLL/lymphoma 7 protein family member B-B from Danio rerio (Zebrafish).